The sequence spans 364 residues: 4-hydroxythreonine-4-phosphate dehydrogenase (364 aa).

Substrate is bound by residues histidine 138 and threonine 139. Residues histidine 169, histidine 214, and histidine 269 each coordinate a divalent metal cation. Residues lysine 277, asparagine 286, and arginine 295 each contribute to the substrate site.

Belongs to the PdxA family. In terms of assembly, homodimer. A divalent metal cation is required as a cofactor.

It is found in the cytoplasm. It catalyses the reaction 4-(phosphooxy)-L-threonine + NAD(+) = 3-amino-2-oxopropyl phosphate + CO2 + NADH. It participates in cofactor biosynthesis; pyridoxine 5'-phosphate biosynthesis; pyridoxine 5'-phosphate from D-erythrose 4-phosphate: step 4/5. Catalyzes the NAD(P)-dependent oxidation of 4-(phosphooxy)-L-threonine (HTP) into 2-amino-3-oxo-4-(phosphooxy)butyric acid which spontaneously decarboxylates to form 3-amino-2-oxopropyl phosphate (AHAP). The polypeptide is 4-hydroxythreonine-4-phosphate dehydrogenase (Bacteroides thetaiotaomicron (strain ATCC 29148 / DSM 2079 / JCM 5827 / CCUG 10774 / NCTC 10582 / VPI-5482 / E50)).